We begin with the raw amino-acid sequence, 485 residues long: E3 ubiquitin-protein ligase RNF14 (485 aa).

In terms of domain architecture, RWD spans 11–137 (DELLALASIY…QFLKEETLTY (127 aa)). Residues 37–45 (RIYLDLPQN) carry the D-box motif. The tract at residues 217-458 (KLFLCSICFC…DSESPCFNRL (242 aa)) is TRIAD supradomain. Residues Cys-221, Cys-224, Cys-239, His-241, Cys-244, Cys-247, Cys-266, Cys-271, Cys-310, Cys-315, Cys-330, Cys-333, Cys-338, Cys-341, and His-346 each coordinate Zn(2+). An RING-type 1 zinc finger spans residues 221–271 (CSICFCEKLGSDCMYFLECKHVYCKACLKDYFEIQIKDGQVKCLNCPEPQC). The segment at 290–351 (ARYDRLLLQS…RLTYHGLSPC (62 aa)) adopts an IBR-type zinc-finger fold. The residue at position 349 (Ser-349) is a Phosphoserine. Zn(2+)-binding residues include Cys-351, Cys-405, and Cys-408. The RING-type 2; atypical zinc-finger motif lies at 405-434 (CPCCGTPIQKLDGCNKMTCTGCMQYFCWIC). Cys-418 is a catalytic residue. Zn(2+) is bound by residues Cys-423, Cys-426, Cys-431, Cys-434, His-446, and Cys-454.

It belongs to the RBR family. RNF14 subfamily. In terms of assembly, interacts with GCN1; interaction takes place in response to ribosome collisions and is required for ubiquitination of EEF1A1/eEF1A. Interacts with the ubiquitin-conjugating enzymes UBE2E1 and UBE2E2. Interacts with AR/androgen receptor. Interacts with TCF7/TCF1, TCF7L1/TCF3 and TCF7L2/TCF4; promoting Wnt signaling. In terms of processing, RING-type zinc finger-dependent and UBE2E2-dependent autoubiquitination.

It is found in the cytoplasm. The protein resides in the nucleus. It catalyses the reaction [E2 ubiquitin-conjugating enzyme]-S-ubiquitinyl-L-cysteine + [acceptor protein]-L-lysine = [E2 ubiquitin-conjugating enzyme]-L-cysteine + [acceptor protein]-N(6)-ubiquitinyl-L-lysine.. Its pathway is protein modification; protein ubiquitination. E3 ubiquitin-protein ligase that plays a key role in the RNF14-RNF25 translation quality control pathway, a pathway that takes place when a ribosome has stalled during translation, and which promotes ubiquitination and degradation of translation factors on stalled ribosomes. Recruited to stalled ribosomes by the ribosome collision sensor GCN1 and mediates 'Lys-6'-linked ubiquitination of target proteins, leading to their degradation. Mediates ubiquitination of EEF1A1/eEF1A and ETF1/eRF1 translation factors on stalled ribosomes, leading to their degradation. Also catalyzes ubiquitination of ribosomal proteins RPL0, RPL1, RPL12, RPS13 and RPS17. Specifically required to resolve RNA-protein cross-links caused by reactive aldehydes, which trigger translation stress by stalling ribosomes: acts by catalying 'Lys-6'-linked ubiquitination of RNA-protein cross-links, leading to their removal by the ATP-dependent unfoldase VCP and subsequent degradation by the proteasome. Independently of its function in the response to stalled ribosomes, acts as a regulator of transcription in Wnt signaling via its interaction with TCF transcription factors (TCF7/TCF1, TCF7L1/TCF3 and TCF7L2/TCF4). May also play a role as a coactivator for androgen- and, to a lesser extent, progesterone-dependent transcription. The chain is E3 ubiquitin-protein ligase RNF14 from Mus musculus (Mouse).